The following is a 192-amino-acid chain: Cytidylate kinase (192 aa).

ATP is bound at residue 12-20 (GLAGSGTTT).

It belongs to the cytidylate kinase family. Type 2 subfamily.

It localises to the cytoplasm. It carries out the reaction CMP + ATP = CDP + ADP. It catalyses the reaction dCMP + ATP = dCDP + ADP. This is Cytidylate kinase (cmk) from Pyrococcus horikoshii (strain ATCC 700860 / DSM 12428 / JCM 9974 / NBRC 100139 / OT-3).